The following is a 424-amino-acid chain: UPF0053 protein MG146 (424 aa).

In terms of domain architecture, CNNM transmembrane spans 6 to 191 (SGLTLTVIIL…EQNGLFSKED (186 aa)). Helical transmembrane passes span 7-27 (GLTL…STVV), 71-91 (LITI…ILFL), 101-121 (LLSS…FCEI), and 135-155 (LVLF…ITKL). CBS domains are found at residues 210 to 270 (MIKW…PKSL) and 272 to 332 (LNQL…IYDE).

Belongs to the UPF0053 family.

It is found in the cell membrane. In Mycoplasma genitalium (strain ATCC 33530 / DSM 19775 / NCTC 10195 / G37) (Mycoplasmoides genitalium), this protein is UPF0053 protein MG146.